We begin with the raw amino-acid sequence, 595 residues long: Solute carrier family 13 member 1 (595 aa).

The next 5 helical transmembrane spans lie at 13–33, 40–60, 77–97, 113–133, and 134–154; these read FLLV…IRSK, ILFV…ITAL, VASA…CLAT, VMMV…STAF, and LSMW…VEAV. An N-linked (GlcNAc...) asparagine glycan is attached at Asn-174. The segment at 190–218 is disordered; that stretch reads QETNERKEKTKPALGSSNDKGKVSSKMET. A compositionally biased stretch (basic and acidic residues) spans 208–218; the sequence is DKGKVSSKMET. The next 8 membrane-spanning stretches (helical) occupy residues 239-259, 283-303, 348-368, 381-401, 464-484, 491-511, 512-532, and 553-573; these read LMCL…ITGT, SWFL…WIWL, IVTL…DPGF, GYVT…LIPA, PLGS…VTSL, PATI…IHVN, PLHI…LPVA, and AGLG…FTWI. Asn-591 carries N-linked (GlcNAc...) asparagine glycosylation.

Belongs to the SLC13A/DASS transporter (TC 2.A.47) family. NADC subfamily. As to expression, kidney and intestine.

The protein resides in the apical cell membrane. It carries out the reaction sulfate(out) + 3 Na(+)(out) = sulfate(in) + 3 Na(+)(in). The enzyme catalyses selenate(out) + 3 Na(+)(out) = selenate(in) + 3 Na(+)(in). It catalyses the reaction thiosulfate(out) + 3 Na(+)(out) = thiosulfate(in) + 3 Na(+)(in). Its function is as follows. Sodium:sulfate symporter that mediates sulfate reabsorption in the kidney and small intestine. Can also mediate the transport of selenate and thiosulfate. In Rattus norvegicus (Rat), this protein is Solute carrier family 13 member 1 (Slc13a1).